The chain runs to 231 residues: 5'-methylthioadenosine/S-adenosylhomocysteine nucleosidase (231 aa).

Catalysis depends on E12, which acts as the Proton acceptor. Residues G78, V153, and 174 to 175 contribute to the substrate site; that span reads ME. D198 functions as the Proton donor in the catalytic mechanism.

It belongs to the PNP/UDP phosphorylase family. MtnN subfamily.

The enzyme catalyses S-adenosyl-L-homocysteine + H2O = S-(5-deoxy-D-ribos-5-yl)-L-homocysteine + adenine. The catalysed reaction is S-methyl-5'-thioadenosine + H2O = 5-(methylsulfanyl)-D-ribose + adenine. It carries out the reaction 5'-deoxyadenosine + H2O = 5-deoxy-D-ribose + adenine. It functions in the pathway amino-acid biosynthesis; L-methionine biosynthesis via salvage pathway; S-methyl-5-thio-alpha-D-ribose 1-phosphate from S-methyl-5'-thioadenosine (hydrolase route): step 1/2. Its function is as follows. Catalyzes the irreversible cleavage of the glycosidic bond in both 5'-methylthioadenosine (MTA) and S-adenosylhomocysteine (SAH/AdoHcy) to adenine and the corresponding thioribose, 5'-methylthioribose and S-ribosylhomocysteine, respectively. Also cleaves 5'-deoxyadenosine, a toxic by-product of radical S-adenosylmethionine (SAM) enzymes, into 5-deoxyribose and adenine. The polypeptide is 5'-methylthioadenosine/S-adenosylhomocysteine nucleosidase (Vibrio vulnificus (strain YJ016)).